Reading from the N-terminus, the 249-residue chain is Enolase-phosphatase E1 (249 aa).

The Mg(2+) site is built by Asp9 and Glu11. Residues 137-138 (SS) and Lys177 each bind substrate. A Mg(2+)-binding site is contributed by Asp204.

This sequence belongs to the HAD-like hydrolase superfamily. MasA/MtnC family. Monomer. Requires Mg(2+) as cofactor.

The protein resides in the cytoplasm. It localises to the nucleus. It carries out the reaction 5-methylsulfanyl-2,3-dioxopentyl phosphate + H2O = 1,2-dihydroxy-5-(methylsulfanyl)pent-1-en-3-one + phosphate. It functions in the pathway amino-acid biosynthesis; L-methionine biosynthesis via salvage pathway; L-methionine from S-methyl-5-thio-alpha-D-ribose 1-phosphate: step 3/6. Its pathway is amino-acid biosynthesis; L-methionine biosynthesis via salvage pathway; L-methionine from S-methyl-5-thio-alpha-D-ribose 1-phosphate: step 4/6. Bifunctional enzyme that catalyzes the enolization of 2,3-diketo-5-methylthiopentyl-1-phosphate (DK-MTP-1-P) into the intermediate 2-hydroxy-3-keto-5-methylthiopentenyl-1-phosphate (HK-MTPenyl-1-P), which is then dephosphorylated to form the acireductone 1,2-dihydroxy-3-keto-5-methylthiopentene (DHK-MTPene). This is Enolase-phosphatase E1 from Lodderomyces elongisporus (strain ATCC 11503 / CBS 2605 / JCM 1781 / NBRC 1676 / NRRL YB-4239) (Yeast).